Here is a 311-residue protein sequence, read N- to C-terminus: Aquaporin Lacbi1:392091 (311 aa).

At 1–16 (MHPQVASLFDNVYEDL) the chain is on the cytoplasmic side. A helical membrane pass occupies residues 17 to 37 (AAATLEFIGTAFFLLFGLGGI). Over 38-56 (QASTAEDTASGQPPASGIE) the chain is Extracellular. Residues 57–77 (HVLYISTCMGLSLVVSAWLFF) traverse the membrane as a helical segment. Arg78 is a topological domain (cytoplasmic). A helical membrane pass occupies residues 79-99 (VTGGLFNPNISFALLLVGGLK). An NPA 1 motif is present at residues 85 to 87 (NPN). Pro100 is a topological domain (extracellular). The helical transmembrane segment at 101–121 (LRFVLFCIAQLTGAIAGAAIV) threads the bilayer. Residues 122–143 (RGLTSAPLSVNNVLQQGTSAAQ) are Cytoplasmic-facing. Residues 144-164 (GVFIEMFITAALVLSVLMLAA) traverse the membrane as a helical segment. Topologically, residues 165 to 168 (EKHE) are extracellular. Residues 169 to 189 (ATPFAPVGIGLTLFACHLFAV) form a helical membrane-spanning segment. The Cytoplasmic segment spans residues 190 to 215 (YYTGAAMNSARAFGPAVISGFPEPQH). The NPA 2 signature appears at 197-199 (NSA). A helical transmembrane segment spans residues 216 to 236 (WVYWVGPFLGSLLGAGFYATL). Topologically, residues 237–311 (KHYKYWHLNP…TSSRTNFSPV (75 aa)) are extracellular. Positions 276-311 (DEETRNGCASNEEGVRATGDEKSSNATSSRTNFSPV) are disordered. The segment covering 288–298 (EGVRATGDEKS) has biased composition (basic and acidic residues). Positions 299–311 (SNATSSRTNFSPV) are enriched in polar residues. The N-linked (GlcNAc...) asparagine glycan is linked to Asn300.

Belongs to the MIP/aquaporin (TC 1.A.8) family.

The protein resides in the membrane. The catalysed reaction is H2O(in) = H2O(out). It catalyses the reaction NH4(+)(in) = NH4(+)(out). Water channel required to facilitate the transport of water across membranes. Also enables low but statistically significant ammonium permeability. May be involved in fungal nitrogen (ammonium) support of the plant host in symbiosis. In Laccaria bicolor (strain S238N-H82 / ATCC MYA-4686) (Bicoloured deceiver), this protein is Aquaporin Lacbi1:392091.